We begin with the raw amino-acid sequence, 506 residues long: Maturase K (506 aa).

Belongs to the intron maturase 2 family. MatK subfamily.

It localises to the plastid. Its subcellular location is the chloroplast. Functionally, usually encoded in the trnK tRNA gene intron. Probably assists in splicing its own and other chloroplast group II introns. The sequence is that of Maturase K from Medicago truncatula (Barrel medic).